The primary structure comprises 142 residues: ATP synthase epsilon chain (142 aa).

It belongs to the ATPase epsilon chain family. As to quaternary structure, F-type ATPases have 2 components, CF(1) - the catalytic core - and CF(0) - the membrane proton channel. CF(1) has five subunits: alpha(3), beta(3), gamma(1), delta(1), epsilon(1). CF(0) has three main subunits: a, b and c.

It is found in the cell inner membrane. Functionally, produces ATP from ADP in the presence of a proton gradient across the membrane. This is ATP synthase epsilon chain from Shewanella denitrificans (strain OS217 / ATCC BAA-1090 / DSM 15013).